Consider the following 137-residue polypeptide: Cellular retinoic acid-binding protein 1 (137 aa).

Residues 21–31 (KALGVNAMLRK) carry the Nuclear localization signal motif. 132–134 (RIY) contacts all-trans-retinoate.

It belongs to the calycin superfamily. Fatty-acid binding protein (FABP) family.

It is found in the cytoplasm. In terms of biological role, cytosolic CRABPs may regulate the access of retinoic acid to the nuclear retinoic acid receptors. The polypeptide is Cellular retinoic acid-binding protein 1 (CRABP1) (Homo sapiens (Human)).